Reading from the N-terminus, the 104-residue chain is Large ribosomal subunit protein uL24 (104 aa).

It belongs to the universal ribosomal protein uL24 family. In terms of assembly, part of the 50S ribosomal subunit.

One of two assembly initiator proteins, it binds directly to the 5'-end of the 23S rRNA, where it nucleates assembly of the 50S subunit. Functionally, one of the proteins that surrounds the polypeptide exit tunnel on the outside of the subunit. This Nitrobacter hamburgensis (strain DSM 10229 / NCIMB 13809 / X14) protein is Large ribosomal subunit protein uL24.